Consider the following 325-residue polypeptide: L-lactate dehydrogenase 1 (325 aa).

Residues V17, D38, K43, Y68, and 82 to 83 contribute to the NAD(+) site; that span reads GA. Substrate is bound by residues Q85, R91, and 123–126; that span reads NPVD. Residues 121–123 and S146 contribute to the NAD(+) site; that span reads AAN. A substrate-binding site is contributed by 151–154; the sequence is DTAR. R156 and H171 together coordinate beta-D-fructose 1,6-bisphosphate. H178 acts as the Proton acceptor in catalysis. Y223 carries the post-translational modification Phosphotyrosine. T232 contacts substrate.

This sequence belongs to the LDH/MDH superfamily. LDH family. As to quaternary structure, homotetramer.

The protein localises to the cytoplasm. It carries out the reaction (S)-lactate + NAD(+) = pyruvate + NADH + H(+). It participates in fermentation; pyruvate fermentation to lactate; (S)-lactate from pyruvate: step 1/1. With respect to regulation, allosterically activated by fructose 1,6-bisphosphate (FBP). In terms of biological role, catalyzes the conversion of lactate to pyruvate. This chain is L-lactate dehydrogenase 1, found in Lactococcus lactis subsp. cremoris (Streptococcus cremoris).